The sequence spans 190 residues: Segregation and condensation protein B (190 aa).

It belongs to the ScpB family. As to quaternary structure, homodimer. Homodimerization may be required to stabilize the binding of ScpA to the Smc head domains. Component of a cohesin-like complex composed of ScpA, ScpB and the Smc homodimer, in which ScpA and ScpB bind to the head domain of Smc. The presence of the three proteins is required for the association of the complex with DNA.

Its subcellular location is the cytoplasm. Participates in chromosomal partition during cell division. May act via the formation of a condensin-like complex containing Smc and ScpA that pull DNA away from mid-cell into both cell halves. The chain is Segregation and condensation protein B from Bacillus thuringiensis subsp. konkukian (strain 97-27).